We begin with the raw amino-acid sequence, 265 residues long: Homeobox protein CDX-1 (265 aa).

Positions 9 to 153 (KDSPVYPGPA…GGGGSGKTRT (145 aa)) are disordered. Positions 30 to 42 (YGPPAPPPAPPQY) are enriched in pro residues. The span at 73 to 92 (AAAYGPGPAAPAASPASLAF) shows a compositional bias: low complexity. The span at 93–108 (GPPPDFSPVPAPPGPG) shows a compositional bias: pro residues. Residues 110 to 126 (GLLAQPLGGPGTPSSPG) show a composition bias toward low complexity. A DNA-binding region (homeobox) is located at residues 154–213 (KDKYRVVYTDHQRLELEKEFHYSRYITIRRKSELAANLGLTERQVKIWFQNRRAKERKVN). Residues 157-178 (YRVVYTDHQRLELEKEFHYSRY) form an interaction with DNA region. The interval 196-207 (RQVKIWFQNRRA) is interaction with 5-mCpG DNA. Over residues 207-217 (AKERKVNKKKQ) the composition is skewed to basic residues. The tract at residues 207 to 265 (AKERKVNKKKQQQQQPPQPPMAHDITATPAGPSLGGLCPSNTSLLATSSPMPVKEEFLP) is disordered. Over residues 245-256 (PSNTSLLATSSP) the composition is skewed to polar residues.

This sequence belongs to the Caudal homeobox family. Intestinal epithelium.

Its subcellular location is the nucleus. Functionally, plays a role in transcriptional regulation. Involved in activated KRAS-mediated transcriptional activation of PRKD1 in colorectal cancer (CRC) cells. Binds to the PRKD1 promoter in colorectal cancer (CRC) cells. Could play a role in the terminal differentiation of the intestine. Binds preferentially to methylated DNA. The polypeptide is Homeobox protein CDX-1 (CDX1) (Homo sapiens (Human)).